Reading from the N-terminus, the 743-residue chain is Phosphoribosylformylglycinamidine synthase subunit PurL (743 aa).

Residue histidine 53 is part of the active site. ATP contacts are provided by tyrosine 56 and lysine 95. Residue glutamate 97 coordinates Mg(2+). Residues 98–101 (SHNH) and arginine 120 contribute to the substrate site. Catalysis depends on histidine 99, which acts as the Proton acceptor. Position 121 (aspartate 121) interacts with Mg(2+). Glutamine 245 is a binding site for substrate. Residue aspartate 275 coordinates Mg(2+). A substrate-binding site is contributed by 319 to 321 (ESQ). Aspartate 502 and glycine 539 together coordinate ATP. Asparagine 540 provides a ligand contact to Mg(2+). Serine 542 provides a ligand contact to substrate.

The protein belongs to the FGAMS family. As to quaternary structure, monomer. Part of the FGAM synthase complex composed of 1 PurL, 1 PurQ and 2 PurS subunits.

Its subcellular location is the cytoplasm. It carries out the reaction N(2)-formyl-N(1)-(5-phospho-beta-D-ribosyl)glycinamide + L-glutamine + ATP + H2O = 2-formamido-N(1)-(5-O-phospho-beta-D-ribosyl)acetamidine + L-glutamate + ADP + phosphate + H(+). The protein operates within purine metabolism; IMP biosynthesis via de novo pathway; 5-amino-1-(5-phospho-D-ribosyl)imidazole from N(2)-formyl-N(1)-(5-phospho-D-ribosyl)glycinamide: step 1/2. In terms of biological role, part of the phosphoribosylformylglycinamidine synthase complex involved in the purines biosynthetic pathway. Catalyzes the ATP-dependent conversion of formylglycinamide ribonucleotide (FGAR) and glutamine to yield formylglycinamidine ribonucleotide (FGAM) and glutamate. The FGAM synthase complex is composed of three subunits. PurQ produces an ammonia molecule by converting glutamine to glutamate. PurL transfers the ammonia molecule to FGAR to form FGAM in an ATP-dependent manner. PurS interacts with PurQ and PurL and is thought to assist in the transfer of the ammonia molecule from PurQ to PurL. This is Phosphoribosylformylglycinamidine synthase subunit PurL from Lactobacillus helveticus (strain DPC 4571).